The chain runs to 1142 residues: DNA-directed RNA polymerase subunit beta N-terminal section (1142 aa).

Belongs to the RNA polymerase beta chain family. As to quaternary structure, in plastids the minimal PEP RNA polymerase catalytic core is composed of four subunits: alpha, beta, beta', and beta''. When a (nuclear-encoded) sigma factor is associated with the core the holoenzyme is formed, which can initiate transcription.

It localises to the plastid. The protein localises to the chloroplast. The enzyme catalyses RNA(n) + a ribonucleoside 5'-triphosphate = RNA(n+1) + diphosphate. DNA-dependent RNA polymerase catalyzes the transcription of DNA into RNA using the four ribonucleoside triphosphates as substrates. The sequence is that of DNA-directed RNA polymerase subunit beta N-terminal section (rpoB1) from Pleurastrum terricola (Filamentous green alga).